Reading from the N-terminus, the 567-residue chain is Malate synthase (567 aa).

Residue Arg177 is the Proton acceptor of the active site. The active-site Proton donor is Asp466. The Microbody targeting signal signature appears at 565-567; that stretch reads CKL.

Belongs to the malate synthase family.

The protein resides in the glyoxysome. It catalyses the reaction glyoxylate + acetyl-CoA + H2O = (S)-malate + CoA + H(+). The protein operates within carbohydrate metabolism; glyoxylate cycle; (S)-malate from isocitrate: step 2/2. The polypeptide is Malate synthase (Oryza sativa subsp. japonica (Rice)).